Here is a 518-residue protein sequence, read N- to C-terminus: Probable cytochrome P450 317a1 (518 aa).

C461 is a binding site for heme.

This sequence belongs to the cytochrome P450 family. Heme is required as a cofactor.

The protein resides in the endoplasmic reticulum membrane. Its subcellular location is the microsome membrane. Functionally, may be involved in the metabolism of insect hormones and in the breakdown of synthetic insecticides. The protein is Probable cytochrome P450 317a1 (Cyp317a1) of Drosophila melanogaster (Fruit fly).